The chain runs to 542 residues: Chitinase 2 (542 aa).

The signal sequence occupies residues 1–22 (MLTRTFLGMAISAFLASTGVQA). Positions 29 to 314 (PNVMYYWGQN…SQLYSLVHSG (286 aa)) constitute a GH18 domain. Glu166 functions as the Proton donor in the catalytic mechanism. The disordered stretch occupies residues 312–356 (HSGGSTPPPPSSSSATKTTTKTTATSTKTTTTTAPTATSTPGSCP). Residues 323–354 (SSSATKTTTKTTATSTKTTTTTAPTATSTPGS) are compositionally biased toward low complexity. Residues 355–406 (CPVANQPCSTQNQYACTADGKYAVCDHGKWVASSCPSNTVCIPTTDGASIYC) form a chitin-binding, high affinity region. Positions 447–542 (AQLAVTSTDK…APSTSAWNFK (96 aa)) are excised as a propeptide.

The protein belongs to the glycosyl hydrolase 18 family. Chitinase class III subfamily. In terms of assembly, monomer. O-glycosylated.

Its subcellular location is the secreted. The enzyme catalyses Random endo-hydrolysis of N-acetyl-beta-D-glucosaminide (1-&gt;4)-beta-linkages in chitin and chitodextrins.. Probably involved in the apical growth and branching of fungal hyphae. The chain is Chitinase 2 (CHI2) from Rhizopus oligosporus (Rhizopus microsporus var. oligosporus).